The sequence spans 61 residues: MAVQQNRKSRSRRDMRRSHDALTENALTVDQTTGETHRRHHVTKDGIYRGRQLFAKAADAE.

Residues 1–44 (MAVQQNRKSRSRRDMRRSHDALTENALTVDQTTGETHRRHHVTK) form a disordered region. The span at 7–16 (RKSRSRRDMR) shows a compositional bias: basic residues. A compositionally biased stretch (polar residues) spans 25–34 (NALTVDQTTG).

Belongs to the bacterial ribosomal protein bL32 family.

This is Large ribosomal subunit protein bL32 from Acinetobacter baylyi (strain ATCC 33305 / BD413 / ADP1).